Consider the following 335-residue polypeptide: Cathepsin B (335 aa).

The first 17 residues, 1–17, serve as a signal peptide directing secretion; that stretch reads MWRLLATLSCLLVLTSA. The propeptide at 18 to 79 is activation peptide; sequence RSSLYFPPLS…QRDAFAADVV (62 aa). 6 cysteine pairs are disulfide-bonded: cysteine 93-cysteine 122, cysteine 105-cysteine 150, cysteine 141-cysteine 207, cysteine 142-cysteine 146, cysteine 179-cysteine 211, and cysteine 187-cysteine 198. Residue cysteine 108 is part of the active site. N-linked (GlcNAc...) asparagine glycosylation occurs at asparagine 192. N6-acetyllysine is present on lysine 220. Cysteine 227 and cysteine 331 form a disulfide bridge. Active-site residues include histidine 278 and asparagine 298. Residues 333–335 constitute a propeptide that is removed on maturation; sequence HQY.

It belongs to the peptidase C1 family. Dimer of a heavy chain and a light chain cross-linked by a disulfide bond. Interacts with SRPX2. Directly interacts with SHKBP1. As to expression, expressed in myoblasts, the myotube, fibroblasts and fetal muscle (at protein level). Expressed in the spleen (at protein level).

Its subcellular location is the lysosome. The protein resides in the melanosome. It localises to the secreted. It is found in the extracellular space. The protein localises to the apical cell membrane. The catalysed reaction is Hydrolysis of proteins with broad specificity for peptide bonds. Preferentially cleaves -Arg-Arg-|-Xaa bonds in small molecule substrates (thus differing from cathepsin L). In addition to being an endopeptidase, shows peptidyl-dipeptidase activity, liberating C-terminal dipeptides.. Thiol protease which is believed to participate in intracellular degradation and turnover of proteins. Cleaves matrix extracellular phosphoglycoprotein MEPE. Involved in the solubilization of cross-linked TG/thyroglobulin in the thyroid follicle lumen. Has also been implicated in tumor invasion and metastasis. This Bos taurus (Bovine) protein is Cathepsin B (CTSB).